The following is a 261-amino-acid chain: Cytochrome c oxidase subunit 3 (261 aa).

Residues T2 to P15 are Mitochondrial matrix-facing. A helical transmembrane segment spans residues W16–W34. The Mitochondrial intermembrane portion of the chain corresponds to F35–T40. The helical transmembrane segment at I41–T66 threads the bilayer. The Mitochondrial matrix portion of the chain corresponds to Y67 to T72. A helical transmembrane segment spans residues P73–S105. Residues L106 to E128 lie on the Mitochondrial intermembrane side of the membrane. Residues V129 to M152 form a helical membrane-spanning segment. The Mitochondrial matrix segment spans residues E153 to N155. Residues R156–E183 traverse the membrane as a helical segment. Residues T184–D190 lie on the Mitochondrial intermembrane side of the membrane. Residues G191–L223 traverse the membrane as a helical segment. The Mitochondrial matrix portion of the chain corresponds to K224–H232. Residues F233 to I256 form a helical membrane-spanning segment. At Y257–S261 the chain is on the mitochondrial intermembrane side.

Belongs to the cytochrome c oxidase subunit 3 family. In terms of assembly, component of the cytochrome c oxidase (complex IV, CIV), a multisubunit enzyme composed of 14 subunits. The complex is composed of a catalytic core of 3 subunits MT-CO1, MT-CO2 and MT-CO3, encoded in the mitochondrial DNA, and 11 supernumerary subunits COX4I, COX5A, COX5B, COX6A, COX6B, COX6C, COX7A, COX7B, COX7C, COX8 and NDUFA4, which are encoded in the nuclear genome. The complex exists as a monomer or a dimer and forms supercomplexes (SCs) in the inner mitochondrial membrane with NADH-ubiquinone oxidoreductase (complex I, CI) and ubiquinol-cytochrome c oxidoreductase (cytochrome b-c1 complex, complex III, CIII), resulting in different assemblies (supercomplex SCI(1)III(2)IV(1) and megacomplex MCI(2)III(2)IV(2)).

The protein localises to the mitochondrion inner membrane. It catalyses the reaction 4 Fe(II)-[cytochrome c] + O2 + 8 H(+)(in) = 4 Fe(III)-[cytochrome c] + 2 H2O + 4 H(+)(out). Functionally, component of the cytochrome c oxidase, the last enzyme in the mitochondrial electron transport chain which drives oxidative phosphorylation. The respiratory chain contains 3 multisubunit complexes succinate dehydrogenase (complex II, CII), ubiquinol-cytochrome c oxidoreductase (cytochrome b-c1 complex, complex III, CIII) and cytochrome c oxidase (complex IV, CIV), that cooperate to transfer electrons derived from NADH and succinate to molecular oxygen, creating an electrochemical gradient over the inner membrane that drives transmembrane transport and the ATP synthase. Cytochrome c oxidase is the component of the respiratory chain that catalyzes the reduction of oxygen to water. Electrons originating from reduced cytochrome c in the intermembrane space (IMS) are transferred via the dinuclear copper A center (CU(A)) of subunit 2 and heme A of subunit 1 to the active site in subunit 1, a binuclear center (BNC) formed by heme A3 and copper B (CU(B)). The BNC reduces molecular oxygen to 2 water molecules using 4 electrons from cytochrome c in the IMS and 4 protons from the mitochondrial matrix. This Rattus norvegicus (Rat) protein is Cytochrome c oxidase subunit 3.